Here is a 75-residue protein sequence, read N- to C-terminus: Translational regulator CsrA (75 aa).

It belongs to the CsrA/RsmA family. As to quaternary structure, homodimer; the beta-strands of each monomer intercalate to form a hydrophobic core, while the alpha-helices form wings that extend away from the core.

The protein localises to the cytoplasm. Its function is as follows. A translational regulator that binds mRNA to regulate translation initiation and/or mRNA stability. Usually binds in the 5'-UTR at or near the Shine-Dalgarno sequence preventing ribosome-binding, thus repressing translation. Its main target seems to be the major flagellin gene, while its function is anatagonized by FliW. The polypeptide is Translational regulator CsrA (Thermosipho melanesiensis (strain DSM 12029 / CIP 104789 / BI429)).